Consider the following 267-residue polypeptide: Dihydropteroate synthase (267 aa).

A Pterin-binding domain is found at 1–251; the sequence is MTKTKIIGIL…NVDLNVKLAQ (251 aa). Asn11 lines the Mg(2+) pocket. (7,8-dihydropterin-6-yl)methyl diphosphate-binding positions include Thr51, Asp84, Asn103, Asp167, Lys203, and 239-241; that span reads RVH.

The protein belongs to the DHPS family. Mg(2+) serves as cofactor.

It catalyses the reaction (7,8-dihydropterin-6-yl)methyl diphosphate + 4-aminobenzoate = 7,8-dihydropteroate + diphosphate. The protein operates within cofactor biosynthesis; tetrahydrofolate biosynthesis; 7,8-dihydrofolate from 2-amino-4-hydroxy-6-hydroxymethyl-7,8-dihydropteridine diphosphate and 4-aminobenzoate: step 1/2. Functionally, catalyzes the condensation of para-aminobenzoate (pABA) with 6-hydroxymethyl-7,8-dihydropterin diphosphate (DHPt-PP) to form 7,8-dihydropteroate (H2Pte), the immediate precursor of folate derivatives. This chain is Dihydropteroate synthase (folP), found in Staphylococcus haemolyticus.